We begin with the raw amino-acid sequence, 438 residues long: tRNA modification GTPase MnmE (438 aa).

The (6S)-5-formyl-5,6,7,8-tetrahydrofolate site is built by arginine 21, glutamate 79, and lysine 118. The TrmE-type G domain occupies 215–362 (GFSIVLIGAP…LEARIEQIVR (148 aa)). Asparagine 225 is a K(+) binding site. Residues 225–230 (NAGKSS), 244–250 (TDIPGTT), and 269–272 (DTAG) each bind GTP. Serine 229 lines the Mg(2+) pocket. Positions 244, 246, and 249 each coordinate K(+). Threonine 250 serves as a coordination point for Mg(2+). (6S)-5-formyl-5,6,7,8-tetrahydrofolate is bound at residue lysine 438.

The protein belongs to the TRAFAC class TrmE-Era-EngA-EngB-Septin-like GTPase superfamily. TrmE GTPase family. Homodimer. Heterotetramer of two MnmE and two MnmG subunits. The cofactor is K(+).

Its subcellular location is the cytoplasm. Its function is as follows. Exhibits a very high intrinsic GTPase hydrolysis rate. Involved in the addition of a carboxymethylaminomethyl (cmnm) group at the wobble position (U34) of certain tRNAs, forming tRNA-cmnm(5)s(2)U34. The polypeptide is tRNA modification GTPase MnmE (Maricaulis maris (strain MCS10) (Caulobacter maris)).